The following is a 1013-amino-acid chain: Tolloid-like protein 1 (1013 aa).

The first 30 residues, 1 to 30 (MGLGTLSPRMLVWLVASGIVFYGELWVCAG), serve as a signal peptide directing secretion. Residues 31-147 (LDYDYTFDGN…GQNEKNRVPR (117 aa)) constitute a propeptide that is removed on maturation. Residues 148-347 (AATSRTERIW…AQARKLYRCP (200 aa)) form the Peptidase M12A domain. N-linked (GlcNAc...) asparagine glycosylation occurs at Asn169. 4 cysteine pairs are disulfide-bonded: Cys190–Cys346, Cys210–Cys232, Cys212–Cys213, and Cys349–Cys375. A Zn(2+)-binding site is contributed by His240. Glu241 is an active-site residue. The Zn(2+) site is built by His244 and His250. CUB domains follow at residues 349-461 (CGET…YEAI) and 462-574 (CGGE…FFKE). N-linked (GlcNAc...) asparagine glycosylation is found at Asn359 and Asn390. Disulfide bonds link Cys402–Cys424, Cys462–Cys488, Cys515–Cys537, Cys578–Cys590, Cys586–Cys599, Cys601–Cys614, Cys618–Cys644, Cys671–Cys693, Cys734–Cys745, Cys741–Cys754, Cys756–Cys769, Cys774–Cys800, Cys827–Cys849, Cys887–Cys917, and Cys944–Cys966. The region spanning 574 to 615 (EEDECAKPDRGGCEQRCLNTLGSYQCACEPGYELGPDRRSCE) is the EGF-like 1; calcium-binding domain. The 113-residue stretch at 618 to 730 (CGGLLTKLNG…KGFKAHFFSD (113 aa)) folds into the CUB 3 domain. A glycan (N-linked (GlcNAc...) asparagine) is linked at Asn626. The EGF-like 2; calcium-binding domain occupies 730–770 (DKDECSKDNGGCQHECVNTMGSYMCQCRNGFVLHDNKHDCK). CUB domains lie at 774-886 (CEQK…HSTE) and 887-1003 (CGGR…YKSI).

Zn(2+) serves as cofactor.

It is found in the secreted. Functionally, protease which processes procollagen C-propeptides, such as chordin, pro-biglycan and pro-lysyl oxidase. Required for the embryonic development. Predominant protease, which in the development, influences dorsal-ventral patterning and skeletogenesis. This chain is Tolloid-like protein 1 (TLL1), found in Homo sapiens (Human).